Reading from the N-terminus, the 187-residue chain is Large ribosomal subunit protein uL13 (187 aa).

The protein belongs to the universal ribosomal protein uL13 family. In terms of assembly, part of the 50S ribosomal subunit.

In terms of biological role, this protein is one of the early assembly proteins of the 50S ribosomal subunit, although it is not seen to bind rRNA by itself. It is important during the early stages of 50S assembly. The protein is Large ribosomal subunit protein uL13 of Pyrobaculum aerophilum (strain ATCC 51768 / DSM 7523 / JCM 9630 / CIP 104966 / NBRC 100827 / IM2).